The sequence spans 178 residues: Endothelin-2 (178 aa).

Residues 1–24 form the signal peptide; sequence MPAPGVHHPNTASPFLKTVAAGKG. A propeptide spanning residues 25–46 is cleaved from the precursor; sequence QVAAAPEHPAPSARARGSHLRP. 2 cysteine pairs are disulfide-bonded: Cys49–Cys63 and Cys51–Cys59. Positions 70–178 are excised as a propeptide; sequence VNTPGQTAPY…RPTHPRRRKR (109 aa). The segment at 96 to 111 is endothelin-like; sequence CECSSGGDPACATFCH. Residues 156-178 are disordered; sequence RFPRRPQEAGRQLRPTHPRRRKR. The segment covering 169-178 has biased composition (basic residues); that stretch reads RPTHPRRRKR.

It belongs to the endothelin/sarafotoxin family.

The protein resides in the secreted. In terms of biological role, endothelins are endothelium-derived vasoconstrictor peptides. The protein is Endothelin-2 (EDN2) of Canis lupus familiaris (Dog).